The following is a 434-amino-acid chain: Histidinol dehydrogenase (434 aa).

Glu260 and His263 together coordinate Zn(2+). Catalysis depends on proton acceptor residues Glu330 and His331. His423 is a Zn(2+) binding site.

The protein belongs to the histidinol dehydrogenase family. The cofactor is Zn(2+).

The catalysed reaction is L-histidinol + 2 NAD(+) + H2O = L-histidine + 2 NADH + 3 H(+). It participates in amino-acid biosynthesis; L-histidine biosynthesis; L-histidine from 5-phospho-alpha-D-ribose 1-diphosphate: step 9/9. Its function is as follows. Catalyzes the sequential NAD-dependent oxidations of L-histidinol to L-histidinaldehyde and then to L-histidine. This is Histidinol dehydrogenase (hisD) from Synechocystis sp. (strain ATCC 27184 / PCC 6803 / Kazusa).